A 204-amino-acid polypeptide reads, in one-letter code: Holliday junction branch migration complex subunit RuvA (204 aa).

The domain I stretch occupies residues Met-1 to Gly-67. The segment at Ser-68–Asp-146 is domain II. Residues Gln-147–Ile-157 are flexible linker. The segment at Ile-157–Pro-204 is domain III.

This sequence belongs to the RuvA family. As to quaternary structure, homotetramer. Forms an RuvA(8)-RuvB(12)-Holliday junction (HJ) complex. HJ DNA is sandwiched between 2 RuvA tetramers; dsDNA enters through RuvA and exits via RuvB. An RuvB hexamer assembles on each DNA strand where it exits the tetramer. Each RuvB hexamer is contacted by two RuvA subunits (via domain III) on 2 adjacent RuvB subunits; this complex drives branch migration. In the full resolvosome a probable DNA-RuvA(4)-RuvB(12)-RuvC(2) complex forms which resolves the HJ.

Its subcellular location is the cytoplasm. Functionally, the RuvA-RuvB-RuvC complex processes Holliday junction (HJ) DNA during genetic recombination and DNA repair, while the RuvA-RuvB complex plays an important role in the rescue of blocked DNA replication forks via replication fork reversal (RFR). RuvA specifically binds to HJ cruciform DNA, conferring on it an open structure. The RuvB hexamer acts as an ATP-dependent pump, pulling dsDNA into and through the RuvAB complex. HJ branch migration allows RuvC to scan DNA until it finds its consensus sequence, where it cleaves and resolves the cruciform DNA. This Synechococcus sp. (strain JA-2-3B'a(2-13)) (Cyanobacteria bacterium Yellowstone B-Prime) protein is Holliday junction branch migration complex subunit RuvA.